Reading from the N-terminus, the 426-residue chain is C4-dicarboxylate transport protein (426 aa).

A run of 8 helical transmembrane segments spans residues 4–24 (SIFTSLYLQVLVAITIGILLG), 44–64 (LIKMIIAPVIFCTVVTGIAGM), 76–96 (IALLYFEVVSTIALIIGLVVV), 142–162 (IGAFASGNILQVLLFAVMFGF), 184–204 (VIFGVINMIMKLAPIGAFGAM), 222–242 (LILCFYITCALFVVLVLGSIA), 326–346 (IWHQVTLLVVLLLSSKGAAGV), and 352–372 (IVLAATLSAVGHLPVAGLALI).

The protein belongs to the dicarboxylate/amino acid:cation symporter (DAACS) (TC 2.A.23) family.

It localises to the cell inner membrane. Responsible for the transport of dicarboxylates such as succinate, fumarate, and malate from the periplasm across the membrane. The polypeptide is C4-dicarboxylate transport protein (Edwardsiella ictaluri (strain 93-146)).